Here is a 159-residue protein sequence, read N- to C-terminus: Probable carbonic anhydrase (159 aa).

Substrate is bound by residues 33–35 (RGD) and 48–49 (QD). Residues histidine 54, histidine 71, and histidine 76 each coordinate Zn(2+).

The protein belongs to the gamma-class carbonic anhydrase family. The cofactor is Zn(2+).

The enzyme catalyses hydrogencarbonate + H(+) = CO2 + H2O. In terms of biological role, probably reversibly hydrates carbon dioxide. This Methanocaldococcus jannaschii (strain ATCC 43067 / DSM 2661 / JAL-1 / JCM 10045 / NBRC 100440) (Methanococcus jannaschii) protein is Probable carbonic anhydrase.